We begin with the raw amino-acid sequence, 158 residues long: GTP-dependent dephospho-CoA kinase (158 aa).

GTP contacts are provided by D35, V36, D54, K56, E109, and D132.

Belongs to the GTP-dependent DPCK family.

The catalysed reaction is 3'-dephospho-CoA + GTP = GDP + CoA + H(+). The protein operates within cofactor biosynthesis; coenzyme A biosynthesis. In terms of biological role, catalyzes the GTP-dependent phosphorylation of the 3'-hydroxyl group of dephosphocoenzyme A to form coenzyme A (CoA). In Methanococcus vannielii (strain ATCC 35089 / DSM 1224 / JCM 13029 / OCM 148 / SB), this protein is GTP-dependent dephospho-CoA kinase.